Consider the following 230-residue polypeptide: Ribose-5-phosphate isomerase A (230 aa).

Substrate-binding positions include 31–34 (TGST), 87–90 (DGAD), and 100–103 (KGGG). Residue glutamate 109 is the Proton acceptor of the active site. Lysine 127 is a binding site for substrate.

It belongs to the ribose 5-phosphate isomerase family. In terms of assembly, homodimer.

It catalyses the reaction aldehydo-D-ribose 5-phosphate = D-ribulose 5-phosphate. It functions in the pathway carbohydrate degradation; pentose phosphate pathway; D-ribose 5-phosphate from D-ribulose 5-phosphate (non-oxidative stage): step 1/1. In terms of biological role, catalyzes the reversible conversion of ribose-5-phosphate to ribulose 5-phosphate. This is Ribose-5-phosphate isomerase A from Lactobacillus delbrueckii subsp. bulgaricus (strain ATCC 11842 / DSM 20081 / BCRC 10696 / JCM 1002 / NBRC 13953 / NCIMB 11778 / NCTC 12712 / WDCM 00102 / Lb 14).